The sequence spans 310 residues: Olfactory receptor 5W2 (310 aa).

The Extracellular segment spans residues 1–25; that stretch reads MDWENCSSLTDFFLLGITNNPEMKV. Asn5 carries N-linked (GlcNAc...) asparagine glycosylation. A helical membrane pass occupies residues 26 to 46; sequence TLFAVFLAVYIINFSANLGMI. The Cytoplasmic portion of the chain corresponds to 47–54; that stretch reads VLIRMDYQ. A helical transmembrane segment spans residues 55-75; sequence LHTPMYFFLSHLSFCDLCYST. The Extracellular segment spans residues 76-99; sequence ATGPKMLVDLLAKNKSIPFYGCAL. A helical transmembrane segment spans residues 100–120; sequence QFLVFCIFADSECLLLSVMAF. The Cytoplasmic segment spans residues 121–139; the sequence is DRYKAIINPLLYTVNMSSR. A helical transmembrane segment spans residues 140–160; sequence VCYLLLTGVYLVGIADALIHM. Residues 161–196 are Extracellular-facing; it reads TLAFRLCFCGSNEINHFFCDIPPLLLLSRSDTQVNE. Residues 197-217 traverse the membrane as a helical segment; sequence LVLFTVFGFIELSTISGVFIS. The Cytoplasmic segment spans residues 218–237; the sequence is YCYIILSVLEIHSAEGRFKA. Residues 238 to 258 form a helical membrane-spanning segment; sequence LSTCTSHLSAVAIFQGTLLFM. The Extracellular portion of the chain corresponds to 259–271; that stretch reads YFRPSSSYSLDQD. The helical transmembrane segment at 272–292 threads the bilayer; it reads KMTSLFYTLVVPMLNPLIYSL. The Cytoplasmic segment spans residues 293–310; that stretch reads RNKDVKEALKKLKNKILF.

It belongs to the G-protein coupled receptor 1 family.

The protein resides in the cell membrane. In terms of biological role, odorant receptor. This Homo sapiens (Human) protein is Olfactory receptor 5W2 (OR5W2).